A 375-amino-acid chain; its full sequence is Phosphate acyltransferase (375 aa).

Residues 354 to 375 (AQDDATSADADAPGDSETGSTN) are disordered. A compositionally biased stretch (low complexity) spans 356-368 (DDATSADADAPGD).

This sequence belongs to the PlsX family. In terms of assembly, homodimer. Probably interacts with PlsY.

The protein resides in the cytoplasm. It catalyses the reaction a fatty acyl-[ACP] + phosphate = an acyl phosphate + holo-[ACP]. It participates in lipid metabolism; phospholipid metabolism. Catalyzes the reversible formation of acyl-phosphate (acyl-PO(4)) from acyl-[acyl-carrier-protein] (acyl-ACP). This enzyme utilizes acyl-ACP as fatty acyl donor, but not acyl-CoA. This Ruegeria sp. (strain TM1040) (Silicibacter sp.) protein is Phosphate acyltransferase.